Consider the following 190-residue polypeptide: MNNNLQGDAIAAAIDVLNEERVIAYPTEAVFGVGCDPDSETAVMRLLELKQRPVDKGLILIAANYEQLKPYIDDTMLTDAQRETIFSRWPGPVTFVFPAPATTPRWLTGRFDSLAVRVTDHPLVVALCQAYGKPLVSTSANLSGLPPCRTVDEVRAQFGAAFPVVPGETGGRLNPSEIRDALTGELFRQG.

A YrdC-like domain is found at 7–190 (GDAIAAAIDV…ALTGELFRQG (184 aa)).

The protein belongs to the SUA5 family. TsaC subfamily.

It is found in the cytoplasm. It catalyses the reaction L-threonine + hydrogencarbonate + ATP = L-threonylcarbamoyladenylate + diphosphate + H2O. Its function is as follows. Required for the formation of a threonylcarbamoyl group on adenosine at position 37 (t(6)A37) in tRNAs that read codons beginning with adenine. Catalyzes the conversion of L-threonine, HCO(3)(-)/CO(2) and ATP to give threonylcarbamoyl-AMP (TC-AMP) as the acyladenylate intermediate, with the release of diphosphate. The polypeptide is Threonylcarbamoyl-AMP synthase (Escherichia coli O1:K1 / APEC).